The chain runs to 308 residues: Baculoviral IAP repeat-containing protein bir-2 (308 aa).

BIR repeat units lie at residues 27–98 (RFAS…EFVM) and 170–241 (RLAT…DFIK). Cysteine 68, cysteine 71, histidine 87, cysteine 94, cysteine 211, cysteine 214, histidine 230, and cysteine 237 together coordinate Zn(2+).

This sequence belongs to the IAP family.

In Caenorhabditis elegans, this protein is Baculoviral IAP repeat-containing protein bir-2.